The primary structure comprises 143 residues: Hemoglobin anodic subunit alpha (143 aa).

Ser2 carries the post-translational modification N-acetylserine. The Globin domain maps to Ser2–Arg143. His60 is an O2 binding site. His89 serves as a coordination point for heme b.

The protein belongs to the globin family. Heterotetramer of two alpha chains and two beta chains. Red blood cells.

Involved in oxygen transport from gills to the various peripheral tissues. The protein is Hemoglobin anodic subunit alpha (hba) of Anguilla anguilla (European freshwater eel).